We begin with the raw amino-acid sequence, 62 residues long: UPF0434 protein ASA_1553 (62 aa).

The protein belongs to the UPF0434 family.

This chain is UPF0434 protein ASA_1553, found in Aeromonas salmonicida (strain A449).